The chain runs to 152 residues: Photosystem II extrinsic protein U, chloroplastic (152 aa).

Residues 1–35 (MDSTAFVGAAAPLRVAAAARSTICMAAADDKPVVS) constitute a chloroplast transit peptide. A thylakoid-targeting transit peptide spans 36–59 (RRAALTGAAAAALAAVAGSLPALA).

It belongs to the PsbU family. PSII is composed of 1 copy each of membrane proteins PsbA, PsbB, PsbC, PsbD, PsbE, PsbF, PsbH, PsbI, PsbJ, PsbK, PsbL, PsbM, PsbT, PsbX, PsbY, PsbZ, Psb30/Ycf12, at least 3 peripheral proteins of the oxygen-evolving complex and a large number of cofactors. It forms dimeric complexes. The oxygen-evolving complex in red algae is composed of PsbO (OEC33), PsbQ', cytochrome c-550 and PsbU. Predicted to be translocated into the thylakoid lumen by the Tat system.

It localises to the plastid. It is found in the chloroplast thylakoid membrane. Its function is as follows. One of the extrinsic, lumenal subunits of photosystem II (PSII). PSII is a light-driven water plastoquinone oxidoreductase, using light energy to abstract electrons from H(2)O, generating a proton gradient subsequently used for ATP formation. The extrinsic proteins stabilize the structure of photosystem II oxygen-evolving complex (OEC), the ion environment of oxygen evolution and protect the OEC against heat-induced inactivation. The chain is Photosystem II extrinsic protein U, chloroplastic from Pyropia yezoensis (Susabi-nori).